A 352-amino-acid chain; its full sequence is SNF1-related protein kinase regulatory subunit gamma-like PV42a (352 aa).

CBS domains follow at residues 24–106 (RNRR…LSDL), 122–196 (LEGL…FDDL), 210–281 (VNDS…ELQT), and 297–352 (KERE…STLS).

It belongs to the 5'-AMP-activated protein kinase gamma subunit family. In terms of tissue distribution, expressed highly in rosette leaves, cauline leaves, open flowers, developing siliques and dry seeds, but at a low level in stems and floral buds.

Functionally, plays redundant role with PV42b in regulating male gametogenesis and pollen tube guidance. The polypeptide is SNF1-related protein kinase regulatory subunit gamma-like PV42a (PV42A) (Arabidopsis thaliana (Mouse-ear cress)).